The chain runs to 240 residues: Spore coat polysaccharide biosynthesis protein SpsF (240 aa).

It belongs to the CMP-NeuNAc synthase family.

The protein operates within spore coat biogenesis; spore coat polysaccharide biosynthesis. The sequence is that of Spore coat polysaccharide biosynthesis protein SpsF (spsF) from Bacillus subtilis (strain 168).